We begin with the raw amino-acid sequence, 524 residues long: Cytochrome P450 704B1 (524 aa).

The chain crosses the membrane as a helical span at residues 2–22; that stretch reads SLCLVIACMVTSWIFLHRWGQ. C471 is a binding site for heme.

It belongs to the cytochrome P450 family. Requires heme as cofactor.

The protein resides in the membrane. The enzyme catalyses an omega-methyl-long-chain fatty acid + reduced [NADPH--hemoprotein reductase] + O2 = an omega-hydroxy-long-chain fatty acid + oxidized [NADPH--hemoprotein reductase] + H2O + H(+). In terms of biological role, involved in pollen wall development. Catalyzes the conversion of long-chain fatty acids to the corresponding omega-hydroxylated fatty acids. Omega-hydroxylated fatty acids, together with in-chain hydroxylated fatty acids, are key monomeric aliphatic building blocks for sporopollenin synthesis during exine formation. In Arabidopsis thaliana (Mouse-ear cress), this protein is Cytochrome P450 704B1 (CYP704B1).